We begin with the raw amino-acid sequence, 127 residues long: uncharacterized protein (127 aa).

This is an uncharacterized protein from Acanthamoeba polyphaga (Amoeba).